A 405-amino-acid polypeptide reads, in one-letter code: Acetate kinase (405 aa).

N7 provides a ligand contact to Mg(2+). K14 lines the ATP pocket. Substrate is bound at residue R98. D156 serves as the catalytic Proton donor/acceptor. ATP contacts are provided by residues 215-219 (HLGNG), 290-292 (DLR), and 338-342 (GVGEN). Residue E391 coordinates Mg(2+).

It belongs to the acetokinase family. Homodimer. It depends on Mg(2+) as a cofactor. Mn(2+) is required as a cofactor.

Its subcellular location is the cytoplasm. It carries out the reaction acetate + ATP = acetyl phosphate + ADP. The protein operates within metabolic intermediate biosynthesis; acetyl-CoA biosynthesis; acetyl-CoA from acetate: step 1/2. Functionally, catalyzes the formation of acetyl phosphate from acetate and ATP. Can also catalyze the reverse reaction. This chain is Acetate kinase, found in Gloeobacter violaceus (strain ATCC 29082 / PCC 7421).